The sequence spans 1048 residues: [F-actin]-monooxygenase MICAL1 (1048 aa).

The tract at residues 1–489 (MASPASTNPA…QDLYDMMDKE (489 aa)) is monooxygenase domain. Residues Cys95, 114-116 (EKR), 121-123 (RHN), Phe181, Tyr293, and Asp393 each bind FAD. Thr475 carries the phosphothreonine modification. A compositionally biased stretch (basic and acidic residues) spans 488–502 (KEHAQRKSDEPDSRK). The disordered stretch occupies residues 488 to 508 (KEHAQRKSDEPDSRKTTTGSA). The Calponin-homology (CH) domain occupies 507-611 (SAGTEELLHW…YLSHFHSAFK (105 aa)). Ser616 carries the post-translational modification Phosphoserine. The disordered stretch occupies residues 643 to 676 (TRAKVDEETPSTEEPPVSEPSMSPNTPELSEHQE). Residues 654 to 666 (TEEPPVSEPSMSP) show a composition bias toward low complexity. Residues 681–743 (ELCELCGKHL…LQHLPQEDQK (63 aa)) form the LIM zinc-binding domain. Residues Cys683, Cys686, His704, Cys707, Cys710, Cys713, Cys733, and His736 each contribute to the Zn(2+) site. 3 disordered regions span residues 741–787 (DQKE…QPAR), 805–825 (IIPD…SDLA), and 839–873 (PVQA…PPLE). The span at 747 to 765 (NNGSLESQELPTPGDSNMQ) shows a compositional bias: polar residues. The segment covering 772–787 (PVTRVSPVPSPSQPAR) has biased composition (low complexity). 2 positions are modified to phosphoserine: Ser777 and Ser781. Coiled-coil stretches lie at residues 847-867 (EAIE…EEEE), 906-949 (EEEM…ESSS), and 974-1031 (EEAE…VNQR). Residues 852–868 (GDDEEEEEEEEEEEEEP) show a composition bias toward acidic residues. Positions 905–1048 (KEEEMKRFCK…EERRLREMPA (144 aa)) constitute a bMERB domain.

It belongs to the Mical family. Associates with the SH3 domain of NEDD9. Interacts with VIM and PLXNA3. Interacts with RAB1B, RAB8A, RAB10, RAB13 and RAB15 (in their GTP-bound forms); binding to RAB1B is of low affinity compared to other Rab proteins; at least in case of RAB8A and RAB10 can bind 2 molecules of the Rab proteins simultaneously. Interacts with STK38 and STK38L. Interacts with GRAF1/ARHGAP26, GRAF2/ARHGAP10, RAB8A, RAB8B and RAB10; may bind simultaneously to GRAFs and Rabs and connects GRAFs to Rabs. Does not interact with RAB1 and RAB11A. Requires FAD as cofactor. Expressed in the postnatal and adult hippocampus; found in dentate gyrus, the polymorphic layer, cornu ammonis (CA) 1-3 and in mossy fibers of the striatum lucidum. In adult hippocampus strongly expressed in CA3 pyramidial neurons.

Its subcellular location is the cytoplasm. It localises to the cytoskeleton. The protein resides in the endosome membrane. The protein localises to the midbody. The enzyme catalyses L-methionyl-[F-actin] + NADPH + O2 + H(+) = L-methionyl-(R)-S-oxide-[F-actin] + NADP(+) + H2O. The catalysed reaction is NADPH + O2 + H(+) = H2O2 + NADP(+). Monooxygenase that promotes depolymerization of F-actin by mediating oxidation of specific methionine residues on actin to form methionine-sulfoxide, resulting in actin filament disassembly and preventing repolymerization. In the absence of actin, it also functions as a NADPH oxidase producing H(2)O(2). Acts as a cytoskeletal regulator that connects NEDD9 to intermediate filaments. Also acts as a negative regulator of apoptosis via its interaction with STK38 and STK38L; acts by antagonizing STK38 and STK38L activation by MST1/STK4. Involved in regulation of lamina-specific connectivity in the nervous system such as the development of lamina-restricted hippocampal connections. Through redox regulation of the actin cytoskeleton controls the intracellular distribution of secretory vesicles containing L1/neurofascin/NgCAM family proteins in neurons, thereby regulating their cell surface levels. May act as Rab effector protein and play a role in vesicle trafficking. Promotes endosomal tubule extension by associating with RAB8 (RAB8A or RAB8B), RAB10 and GRAF (GRAF1/ARHGAP26 or GRAF2/ARHGAP10) on the endosomal membrane which may connect GRAFs to Rabs, thereby participating in neosynthesized Rab8-Rab10-Rab11-dependent protein export. This chain is [F-actin]-monooxygenase MICAL1 (Mical1), found in Mus musculus (Mouse).